Here is a 1116-residue protein sequence, read N- to C-terminus: uncharacterized protein (1116 aa).

The chain crosses the membrane as a helical span at residues 3 to 20 (FFLTFLLFLFTLFSLFVY).

It localises to the membrane. This is an uncharacterized protein from Aquifex aeolicus (strain VF5).